A 443-amino-acid polypeptide reads, in one-letter code: Exodeoxyribonuclease 7 large subunit (443 aa).

Belongs to the XseA family. As to quaternary structure, heterooligomer composed of large and small subunits.

Its subcellular location is the cytoplasm. It carries out the reaction Exonucleolytic cleavage in either 5'- to 3'- or 3'- to 5'-direction to yield nucleoside 5'-phosphates.. Its function is as follows. Bidirectionally degrades single-stranded DNA into large acid-insoluble oligonucleotides, which are then degraded further into small acid-soluble oligonucleotides. This is Exodeoxyribonuclease 7 large subunit from Vibrio campbellii (strain ATCC BAA-1116).